We begin with the raw amino-acid sequence, 316 residues long: N-acetylmuramic acid 6-phosphate etherase (316 aa).

The tract at residues 1-24 (MTRFQSDAAVSADRGHLMTEQPNP) is disordered. The 164-residue stretch at 66–229 (IASRLKDGGR…STAVMVRLGK (164 aa)) folds into the SIS domain. Catalysis depends on Glu-94, which acts as the Proton donor. The active site involves Glu-125.

This sequence belongs to the GCKR-like family. MurNAc-6-P etherase subfamily. As to quaternary structure, homodimer.

The catalysed reaction is N-acetyl-D-muramate 6-phosphate + H2O = N-acetyl-D-glucosamine 6-phosphate + (R)-lactate. The protein operates within amino-sugar metabolism; N-acetylmuramate degradation. Functionally, specifically catalyzes the cleavage of the D-lactyl ether substituent of MurNAc 6-phosphate, producing GlcNAc 6-phosphate and D-lactate. The polypeptide is N-acetylmuramic acid 6-phosphate etherase (Parasynechococcus marenigrum (strain WH8102)).